A 169-amino-acid polypeptide reads, in one-letter code: Putative phosphoesterase SE_0715 (169 aa).

H34 (proton donor) is an active-site residue. Short sequence motifs (HXTX) lie at residues 34 to 37 (HITI) and 115 to 118 (HFTI). The active-site Proton acceptor is the H115.

The protein belongs to the 2H phosphoesterase superfamily. YjcG family.

The protein is Putative phosphoesterase SE_0715 of Staphylococcus epidermidis (strain ATCC 12228 / FDA PCI 1200).